The chain runs to 515 residues: 2-isopropylmalate synthase (515 aa).

One can recognise a Pyruvate carboxyltransferase domain in the interval 5 to 267 (VIIFDTTLRD…DTRINTQEIH (263 aa)). The Mn(2+) site is built by Asp-14, His-202, His-204, and Asn-238. The tract at residues 392–515 (VLDKLSAHST…VADIKNHKHH (124 aa)) is regulatory domain.

It belongs to the alpha-IPM synthase/homocitrate synthase family. LeuA type 1 subfamily. As to quaternary structure, homodimer. Requires Mn(2+) as cofactor.

The protein localises to the cytoplasm. The catalysed reaction is 3-methyl-2-oxobutanoate + acetyl-CoA + H2O = (2S)-2-isopropylmalate + CoA + H(+). The protein operates within amino-acid biosynthesis; L-leucine biosynthesis; L-leucine from 3-methyl-2-oxobutanoate: step 1/4. Catalyzes the condensation of the acetyl group of acetyl-CoA with 3-methyl-2-oxobutanoate (2-ketoisovalerate) to form 3-carboxy-3-hydroxy-4-methylpentanoate (2-isopropylmalate). This Haemophilus influenzae (strain PittEE) protein is 2-isopropylmalate synthase.